The primary structure comprises 557 residues: Aspartate--tRNA ligase, cytoplasmic (557 aa).

Over residues 1–12 (MSQDENIVKAVE) the composition is skewed to basic and acidic residues. Residues 1–74 (MSQDENIVKA…AAAEDTAKDN (74 aa)) are disordered. Ser-2 is modified (N-acetylserine). Ser-14 carries the post-translational modification Phosphoserine. A compositionally biased stretch (basic and acidic residues) spans 37–74 (LQKEQEKQRKKEERALQLEAEREAREKKAAAEDTAKDN). Glu-281 lines the L-aspartate pocket. Position 301 is a phosphoserine (Ser-301). The tract at residues 303–306 (QFNK) is aspartate. Arg-325 serves as a coordination point for L-aspartate. Residues 325-327 (RAE), 333-335 (RHM), and Glu-478 contribute to the ATP site. L-aspartate contacts are provided by Ser-481 and Arg-485. Ser-502 is modified (phosphoserine). Position 528 to 531 (528 to 531 (GLER)) interacts with ATP. The residue at position 546 (Ser-546) is a Phosphoserine.

The protein belongs to the class-II aminoacyl-tRNA synthetase family. Type 2 subfamily. Homodimer.

It is found in the cytoplasm. It carries out the reaction tRNA(Asp) + L-aspartate + ATP = L-aspartyl-tRNA(Asp) + AMP + diphosphate. In Saccharomyces cerevisiae (strain ATCC 204508 / S288c) (Baker's yeast), this protein is Aspartate--tRNA ligase, cytoplasmic (DPS1).